The primary structure comprises 481 residues: 3-isopropylmalate dehydratase large subunit (481 aa).

3 residues coordinate [4Fe-4S] cluster: C363, C423, and C426. A disordered region spans residues 432-459 (DQLKPGERSASTSNRNFEGRQGPGGRTH).

The protein belongs to the aconitase/IPM isomerase family. LeuC type 1 subfamily. In terms of assembly, heterodimer of LeuC and LeuD. [4Fe-4S] cluster is required as a cofactor.

The enzyme catalyses (2R,3S)-3-isopropylmalate = (2S)-2-isopropylmalate. It functions in the pathway amino-acid biosynthesis; L-leucine biosynthesis; L-leucine from 3-methyl-2-oxobutanoate: step 2/4. In terms of biological role, catalyzes the isomerization between 2-isopropylmalate and 3-isopropylmalate, via the formation of 2-isopropylmaleate. The polypeptide is 3-isopropylmalate dehydratase large subunit (Corynebacterium glutamicum (strain R)).